Here is a 426-residue protein sequence, read N- to C-terminus: COP9 signalosome complex subunit 6 (426 aa).

Residues 14–155 enclose the MPN domain; sequence VLLHPLVIMQ…AGTTRKLPLF (142 aa). The disordered stretch occupies residues 320-426; that stretch reads PVRFKSQHLG…NESDESSQAS (107 aa). Residues 334 to 347 are compositionally biased toward acidic residues; the sequence is ADDDDYFDDEDLEN.

It belongs to the peptidase M67A family. CSN6 subfamily. In terms of assembly, component of the CSN complex, probably composed of csn-1, csn-2, csn-3, csn-4, csn-5, csn-6 and csn-7. Within the complex it probably interacts directly with csn-2 and csn-4. Interacts with rbx-1.

The protein localises to the cytoplasm. It is found in the nucleus. In terms of biological role, component of the COP9 signalosome complex (CSN), a complex involved in various cellular and developmental processes. The CSN complex is an essential regulator of the ubiquitin (Ubl) conjugation pathway by mediating the deneddylation of the cullin subunits of the SCF-type E3 ligase complexes, leading to decrease the Ubl ligase activity of SCF. The CSN complex plays an essential role in embryogenesis and oogenesis and is required to regulate microtubule stability in the early embryo. Mediates mei-3/katanin targeting for degradation at the meiosis to mitosis transition via deneddylation of cul-3. This is COP9 signalosome complex subunit 6 (csn-6) from Caenorhabditis elegans.